An 848-amino-acid polypeptide reads, in one-letter code: DNA-binding protein RFX6 (848 aa).

Positions 56 to 131 (TLQWLEDNYI…YHYYGIGIKE (76 aa)) form a DNA-binding region, RFX-type winged-helix.

It belongs to the RFX family. As to expression, expressed in progenitors and hormone expressing cells of the islet lineage.

The protein resides in the nucleus. Its function is as follows. Transcription factor required to direct islet cell differentiation during endocrine pancreas development. The protein is DNA-binding protein RFX6 (rfx6) of Danio rerio (Zebrafish).